Reading from the N-terminus, the 141-residue chain is Large ribosomal subunit protein uL16 (141 aa).

This sequence belongs to the universal ribosomal protein uL16 family. As to quaternary structure, part of the 50S ribosomal subunit. Contacts the CTC protein (RL25).

In terms of biological role, binds the 5S and 23S rRNAs and is also seen to make contacts with the A and P site tRNAs. Interacts with A site tRNA mimics, and is probably one of the key factors, along with a helix of the 23S rRNA, in positioning tRNA stems in the peptidyl-transferase center. The sequence is that of Large ribosomal subunit protein uL16 (rplP) from Deinococcus radiodurans (strain ATCC 13939 / DSM 20539 / JCM 16871 / CCUG 27074 / LMG 4051 / NBRC 15346 / NCIMB 9279 / VKM B-1422 / R1).